A 420-amino-acid polypeptide reads, in one-letter code: Tyrosine--tRNA ligase (420 aa).

Tyr33 provides a ligand contact to L-tyrosine. The 'HIGH' region signature appears at 38–47; that stretch reads PTGPSLHAGH. L-tyrosine-binding residues include Tyr167 and Gln171. The 'KMSKS' region motif lies at 227 to 231; the sequence is KFGKS. Lys230 is an ATP binding site. The region spanning 352–418 is the S4 RNA-binding domain; that stretch reads RTIIDLLVAS…GKKNFAGVQI (67 aa).

It belongs to the class-I aminoacyl-tRNA synthetase family. TyrS type 1 subfamily. Homodimer.

It localises to the cytoplasm. It catalyses the reaction tRNA(Tyr) + L-tyrosine + ATP = L-tyrosyl-tRNA(Tyr) + AMP + diphosphate + H(+). In terms of biological role, catalyzes the attachment of tyrosine to tRNA(Tyr) in a two-step reaction: tyrosine is first activated by ATP to form Tyr-AMP and then transferred to the acceptor end of tRNA(Tyr). The sequence is that of Tyrosine--tRNA ligase from Corynebacterium glutamicum (strain ATCC 13032 / DSM 20300 / JCM 1318 / BCRC 11384 / CCUG 27702 / LMG 3730 / NBRC 12168 / NCIMB 10025 / NRRL B-2784 / 534).